An 85-amino-acid chain; its full sequence is Large ribosomal subunit protein bL27 (85 aa).

A disordered region spans residues methionine 1–glycine 22.

This sequence belongs to the bacterial ribosomal protein bL27 family.

This chain is Large ribosomal subunit protein bL27, found in Vibrio vulnificus (strain CMCP6).